A 669-amino-acid polypeptide reads, in one-letter code: Glutaminase kidney isoform, mitochondrial (669 aa).

Residues 1 to 54 (MMRLRGSGMLRDLLLRSPAGVSATLRRAQPLVTLCRRPRGGGRPAAGPAAAARL) constitute a mitochondrion transit peptide. The interval 68-118 (LARGLSSSPSEILQELGKGSTHPQPGVSPPAAPAAPGPKDGPGETDAFGNS) is disordered. The span at 93-103 (GVSPPAAPAAP) shows a compositional bias: pro residues. K130 and K164 each carry N6-succinyllysine. S286 serves as a coordination point for substrate. An N6-acetyllysine modification is found at K311. A highly mobile activation loop region spans residues 315–322 (GLRFNKLF). Substrate-binding residues include N335, E381, N388, Y414, Y466, and V484. ANK repeat units lie at residues 585–614 (DSRTALHVAAAEGHVEVVKFLLEACKVNPF) and 619–648 (WNNTPMDEALHFGHHDVFKILQEYQVQYTP). The tract at residues 647 to 669 (TPQGDSDNGKENQTVHKNLDGLL) is disordered. S652 is subject to Phosphoserine. Positions 653–669 (DNGKENQTVHKNLDGLL) are enriched in basic and acidic residues.

This sequence belongs to the glutaminase family. Homotetramer, dimer of dimers. The tetramers can assemble into rod-like oligomers (in vitro), but the physiological significance of this is not clear. Interacts with RAF1 and MAP2K2. Interacts with ATCAY; the interaction is direct and may control GLS localization, negatively regulating its activity. In terms of processing, synthesized as a 74-kDa cytosolic precursor which is proteolytically processed by the mitochondrial-processing peptidase (MPP) via a 72-kDa intermediate to yield the mature mitochondrial 68- and 65-kDa subunits. As to expression, isoform 1 and isoform 3 are detected in brain cortex. Isoform 3 is highly expressed in astrocytoma, ganglioglioma and ependymoma. Isoform 1 is highly expressed in brain and kidney, but not detected in liver. Isoform 3 is highly expressed in heart and pancreas, detected at lower levels in placenta, lung, pancreas and kidney, but is not detected in liver. Isoform 2 is expressed in cardiac and skeletal muscle.

Its subcellular location is the mitochondrion. The protein localises to the cytoplasm. It is found in the cytosol. The protein resides in the mitochondrion matrix. The enzyme catalyses L-glutamine + H2O = L-glutamate + NH4(+). Isoform 1 and isoform 3 are activated by phosphate. Inhibited by BPTES. BPTES binds between subunits and favors dissociation of the tetramer into dimers. Inhibited by 6-diazo-5-oxo-L-norleucine (DON). Enzyme activity is stimulated by phosphorylation. Catalyzes the first reaction in the primary pathway for the renal catabolism of glutamine. Plays a role in maintaining acid-base homeostasis. Regulates the levels of the neurotransmitter glutamate, the main excitatory neurotransmitter in the brain. Functionally, lacks catalytic activity. The protein is Glutaminase kidney isoform, mitochondrial (GLS) of Homo sapiens (Human).